The chain runs to 446 residues: Palmitoyltransferase PFA4 (446 aa).

Over 1-8 (MAVQLKWP) the chain is Cytoplasmic. Residues 9-29 (ILGVIIPCIIIFSLSYGSHYF) traverse the membrane as a helical segment. Residues 30-40 (ILRHHLTMKQQ) lie on the Lumenal side of the membrane. Residues 41 to 61 (LIYEFYVTMIWISYLLAIYTN) traverse the membrane as a helical segment. Residues 62-161 (PGRVPKNYKP…GNNNLPHFMR (100 aa)) lie on the Cytoplasmic side of the membrane. The DHHC domain occupies 114 to 164 (RYCKKCNNYKPPRSHHCKICQQCVLQMDHHCPWTLNCVGNNNLPHFMRFLG). Catalysis depends on cysteine 144, which acts as the S-palmitoyl cysteine intermediate. The chain crosses the membrane as a helical span at residues 162–182 (FLGWIIWGTGYLMIQLIKLII). Over 183 to 201 (NYYENSNMPHYLFNKTELV) the chain is Lumenal. The helical transmembrane segment at 202 to 222 (AIIAITPLNFFVFASILVLFI) threads the bilayer. Over 223 to 446 (RCLINICKGM…TDFGVDEDSD (224 aa)) the chain is Cytoplasmic.

The protein belongs to the DHHC palmitoyltransferase family. PFA4 subfamily.

The protein localises to the endoplasmic reticulum membrane. The enzyme catalyses L-cysteinyl-[protein] + hexadecanoyl-CoA = S-hexadecanoyl-L-cysteinyl-[protein] + CoA. In terms of biological role, mediates the reversible addition of palmitate to target proteins, thereby regulating their membrane association and biological function. In Candida albicans (strain SC5314 / ATCC MYA-2876) (Yeast), this protein is Palmitoyltransferase PFA4.